Consider the following 718-residue polypeptide: Quinohemoprotein alcohol dehydrogenase ADH-IIG (718 aa).

A signal peptide spans 1 to 29; the sequence is MRQTGLASLPLKSLAVAVLLSLAGTPALA. Glu92 lines the pyrroloquinoline quinone pocket. Cys138 and Cys139 are disulfide-bonded. Residues Arg144, Thr189, and 205-206 contribute to the pyrroloquinoline quinone site; that span reads GA. Glu207 contacts Ca(2+). Thr264 lines the pyrroloquinoline quinone pocket. Asn284 and Asp329 together coordinate Ca(2+). Asp329 acts as the Proton acceptor in catalysis. Residue Lys356 participates in pyrroloquinoline quinone binding. Trp415 serves as a coordination point for substrate. Pyrroloquinoline quinone is bound by residues 419–420 and Ala571; that span reads DW. One can recognise a Cytochrome c domain in the interval 622–699; the sequence is ASIEAGAKLY…QIHQYLIKRA (78 aa). Heme c-binding residues include Cys635, Cys638, His639, and Met676.

It belongs to the bacterial PQQ dehydrogenase family. As to quaternary structure, monomer. Pyrroloquinoline quinone serves as cofactor. Ca(2+) is required as a cofactor. The cofactor is heme c.

Its subcellular location is the periplasm. The enzyme catalyses 2 oxidized [azurin] + a primary alcohol = 2 reduced [azurin] + an aldehyde + 2 H(+). With respect to regulation, exhibits higher affinity for 1-butanol compared to 1,2-propanediol but inhibited by 10 mM 1-butanol. Functionally, catalyzes the dye-linked oxidation of primary alcohols to the corresponding aldehydes and the (subsequent) oxidation of the aldehydes to carboxylic acids. Active with primary alcohols, glycerol, 1,2-propanediol, 1,3-propanediol but not with methanol or sugar alcohols such as D-sorbitol. The polypeptide is Quinohemoprotein alcohol dehydrogenase ADH-IIG (Pseudomonas putida (Arthrobacter siderocapsulatus)).